The sequence spans 429 residues: Saccharopine dehydrogenase-like oxidoreductase (429 aa).

Residue alanine 2 is modified to N-acetylalanine. Serine 217 bears the Phosphoserine mark.

The protein belongs to the saccharopine dehydrogenase family.

This is Saccharopine dehydrogenase-like oxidoreductase (SCCPDH) from Pongo abelii (Sumatran orangutan).